The sequence spans 382 residues: Mannitol-1-phosphate 5-dehydrogenase (382 aa).

Residue alanine 3–glycine 14 coordinates NAD(+). Position 269 is an N6-acetyllysine (lysine 269).

The protein belongs to the mannitol dehydrogenase family.

The enzyme catalyses D-mannitol 1-phosphate + NAD(+) = beta-D-fructose 6-phosphate + NADH + H(+). The chain is Mannitol-1-phosphate 5-dehydrogenase from Escherichia coli O17:K52:H18 (strain UMN026 / ExPEC).